The chain runs to 248 residues: Large ribosomal subunit protein uL4 (248 aa).

Disordered stretches follow at residues 48–96 (GTHK…PVPR) and 210–248 (AFSE…RTGA). Positions 233 to 248 (DATKARSSRHDDRTGA) are enriched in basic and acidic residues.

Belongs to the universal ribosomal protein uL4 family. Part of the 50S ribosomal subunit.

Its function is as follows. One of the primary rRNA binding proteins, this protein initially binds near the 5'-end of the 23S rRNA. It is important during the early stages of 50S assembly. It makes multiple contacts with different domains of the 23S rRNA in the assembled 50S subunit and ribosome. In terms of biological role, forms part of the polypeptide exit tunnel. The chain is Large ribosomal subunit protein uL4 from Tropheryma whipplei (strain Twist) (Whipple's bacillus).